The following is a 930-amino-acid chain: Translation initiation factor IF-2 (930 aa).

Disordered stretches follow at residues 160–179 and 208–301; these read EPVE…FTDG and AKRA…AAAP. Residues 208-227 show a composition bias toward basic and acidic residues; sequence AKRAAEEAKRTQPRAEKPAD. 2 stretches are compositionally biased toward basic residues: residues 263–272 and 288–301; these read GHGHKKHHHG and KRGA…AAAP. Positions 431 to 600 constitute a tr-type G domain; the sequence is TRAPVVTVMG…SLQAEVLELT (170 aa). A G1 region spans residues 440-447; that stretch reads GHVDHGKT. Position 440-447 (440-447) interacts with GTP; sequence GHVDHGKT. Residues 465 to 469 form a G2 region; sequence GITQH. The interval 486 to 489 is G3; the sequence is DTPG. GTP is bound by residues 486–490 and 540–543; these read DTPGH and NKCD. The segment at 540–543 is G4; that stretch reads NKCD. A G5 region spans residues 576–578; that stretch reads SAH.

It belongs to the TRAFAC class translation factor GTPase superfamily. Classic translation factor GTPase family. IF-2 subfamily.

Its subcellular location is the cytoplasm. Its function is as follows. One of the essential components for the initiation of protein synthesis. Protects formylmethionyl-tRNA from spontaneous hydrolysis and promotes its binding to the 30S ribosomal subunits. Also involved in the hydrolysis of GTP during the formation of the 70S ribosomal complex. The polypeptide is Translation initiation factor IF-2 (Cellvibrio japonicus (strain Ueda107) (Pseudomonas fluorescens subsp. cellulosa)).